We begin with the raw amino-acid sequence, 185 residues long: Ribosome-recycling factor (185 aa).

It belongs to the RRF family.

It localises to the cytoplasm. Its function is as follows. Responsible for the release of ribosomes from messenger RNA at the termination of protein biosynthesis. May increase the efficiency of translation by recycling ribosomes from one round of translation to another. In Klebsiella pneumoniae (strain 342), this protein is Ribosome-recycling factor.